The following is a 422-amino-acid chain: Glucosylglycerol-phosphate phosphatase (422 aa).

The active-site Proton donor is Asp-403.

Belongs to the histidine acid phosphatase family. In terms of assembly, monomer. Interacts with GGPS.

The enzyme catalyses 2-O-(alpha-D-glucopyranosyl)-sn-glycerol 3-phosphate + H2O = 2-O-(alpha-D-glucopyranosyl)glycerol + phosphate. Its function is as follows. Phosphorylates glucosylglycerol-phosphate the precursor of the osmoprotectant glucosylglycerol necessary for salt adaptation of Synechocystis. In Synechocystis sp. (strain ATCC 27184 / PCC 6803 / Kazusa), this protein is Glucosylglycerol-phosphate phosphatase (stpA).